A 610-amino-acid polypeptide reads, in one-letter code: Protein SAN1 (610 aa).

Residues 1 to 10 show a composition bias toward polar residues; sequence MSESGQEQNR. Disordered regions lie at residues 1 to 36 and 176 to 231; these read MSES…NGGA and VDST…PSIP. Over residues 11–36 the composition is skewed to low complexity; it reads GTNTSPNNAENNNNSNAASGPLNGGA. Over residues 194 to 203 the composition is skewed to basic and acidic residues; sequence EGTKKRKDNE. Residues 210 to 223 are compositionally biased toward polar residues; it reads TADNDSNPSITNAT. The RING-type zinc finger occupies 240-280; sequence NDEETNPSYKHSPIKLPCGHIFGRECIYKWSRLENSCPLCR. Disordered regions lie at residues 318–348, 360–453, 471–502, 514–554, and 569–610; these read TAVN…ASSG, VPQN…TDPH, GTSD…TTQG, GHFT…GVAS, and NNNS…RSSQ. The segment covering 319–348 has biased composition (polar residues); the sequence is AVNSTNENSSAPSENTSNTTVPTIGNASSG. Composition is skewed to low complexity over residues 384-406 and 425-447; these read NGPS…NQSP and PSAS…NTSS. Residues 471–492 show a composition bias toward polar residues; it reads GTSDTSATTAPGAQTVHNQGRN. Residues 493 to 502 show a composition bias toward low complexity; sequence DSSSSDTTQG. Composition is skewed to polar residues over residues 533-554 and 592-610; these read QQRG…GVAS and DTTI…RSSQ.

Functionally, plays a specific role in mating-type regulation of yeast, by acting post-translationally to control the stability or activity of the SIR4 proteins. The protein is Protein SAN1 (SAN1) of Saccharomyces cerevisiae (strain ATCC 204508 / S288c) (Baker's yeast).